A 247-amino-acid chain; its full sequence is Dof zinc finger protein DOF3.5 (247 aa).

The Dof-type zinc finger occupies 25–79; that stretch reads PSCPRCGSSNTKFCYYNNYSLTQPRYFCKGCRRYWTKGGSLRNVPVGGGCRKSRR. Residues cysteine 27, cysteine 30, cysteine 52, and cysteine 55 each contribute to the Zn(2+) site. Residues 70 to 100 form a disordered region; the sequence is VGGGCRKSRRPKSSSGNNTKTSLTANSGNPG. Residues 82–94 are compositionally biased toward polar residues; it reads SSSGNNTKTSLTA.

It localises to the nucleus. Its function is as follows. Transcription factor that binds specifically to a 5'-AA[AG]G-3' consensus core sequence. This is Dof zinc finger protein DOF3.5 (DOF3.5) from Arabidopsis thaliana (Mouse-ear cress).